The following is a 283-amino-acid chain: U3 small nucleolar ribonucleoprotein protein IMP4 (283 aa).

The Brix domain maps to 79–260; the sequence is PKVIVTTSRD…LYELTLGTLE (182 aa).

Component of a heterotrimeric complex containing IMP3, IMP4 and MPP10.

It is found in the nucleus. The protein resides in the nucleolus. Component of the U3 small nucleolar ribonucleoprotein. Required for the early cleavages at sites A0, A1 and A2 during 18S ribosomal pre-RNA processing. In Eremothecium gossypii (strain ATCC 10895 / CBS 109.51 / FGSC 9923 / NRRL Y-1056) (Yeast), this protein is U3 small nucleolar ribonucleoprotein protein IMP4 (IMP4).